The primary structure comprises 136 residues: Classical arabinogalactan protein 11 (136 aa).

An N-terminal signal peptide occupies residues 1–20 (MARLFVVVALLALAVGTVFA). Composition is skewed to low complexity over residues 24 to 56 (PSAA…ASSP), 68 to 81 (SAAS…APTV), and 89 to 107 (PEAD…PAAA). The tract at residues 24–115 (PSAAPTASPT…AAESPKSGAT (92 aa)) is disordered. Residue S112 is the site of GPI-anchor amidated serine attachment. Positions 113–136 (GATTNVKLSIAGTVAAAGFFIFSL) are cleaved as a propeptide — removed in mature form.

Belongs to the classical AGP family. Post-translationally, O-glycosylated on the hydroxyproline residues.

It is found in the cell membrane. In terms of biological role, proteoglycan that seems to be implicated in diverse developmental roles such as differentiation, cell-cell recognition, embryogenesis and programmed cell death. This Arabidopsis thaliana (Mouse-ear cress) protein is Classical arabinogalactan protein 11 (AGP11).